The primary structure comprises 37 residues: MKVKPSVKKICGVCKVIRRNGRVAVLCSNPRHKQRQG.

Belongs to the bacterial ribosomal protein bL36 family.

The sequence is that of Large ribosomal subunit protein bL36 from Tropheryma whipplei (strain Twist) (Whipple's bacillus).